The chain runs to 867 residues: Bifunctional cis-abienol synthase, chloroplastic (867 aa).

A chloroplast-targeting transit peptide spans 1 to 49 (MALPVYSLKSHIPITTIASAKMNYTPNKGMITANGRSRRIRLSPNKIVA). Lys-270 contacts substrate. A DXDD motif motif is present at residues 403–406 (DIDD). Lys-490 provides a ligand contact to substrate. Mg(2+) is bound by residues Asp-622, Asp-626, Asn-763, Asp-764, Thr-767, and Glu-771. The DDXXD motif signature appears at 622-626 (DDLYD).

The protein belongs to the terpene synthase family. Tpsd subfamily. Mg(2+) serves as cofactor.

The protein resides in the plastid. It localises to the chloroplast. It carries out the reaction 8-hydroxycopalyl diphosphate = cis-abienol + diphosphate. It catalyses the reaction (2E,6E,10E)-geranylgeranyl diphosphate + H2O = 8-hydroxycopalyl diphosphate. Its pathway is terpene metabolism; oleoresin biosynthesis. Its function is as follows. Involved in the biosynthesis of cis-abienol, a labdane diterpene that can be used as synthesis precursor of ambergris substitution fragance products. Bifunctional class I/II enzyme in which both the bicyclization and water capture occur in the class II active site, resulting in an intermediary labda-13-en-8-ol diphosphate, which undergoes cleavage of the diphosphate group and final deprotonation at the class I active site. No activity with copalyl diphosphate as substrate. The chain is Bifunctional cis-abienol synthase, chloroplastic (CAS) from Abies balsamea (Balsam fir).